We begin with the raw amino-acid sequence, 478 residues long: Glutamyl-tRNA reductase (478 aa).

Residues 49 to 52 (TCNR), Ser109, 114 to 116 (EQQ), and Gln120 contribute to the substrate site. The Nucleophile role is filled by Cys50. Residue 191–196 (GAGSMG) participates in NADP(+) binding.

This sequence belongs to the glutamyl-tRNA reductase family. Homodimer.

It carries out the reaction (S)-4-amino-5-oxopentanoate + tRNA(Glu) + NADP(+) = L-glutamyl-tRNA(Glu) + NADPH + H(+). Its pathway is porphyrin-containing compound metabolism; protoporphyrin-IX biosynthesis; 5-aminolevulinate from L-glutamyl-tRNA(Glu): step 1/2. In terms of biological role, catalyzes the NADPH-dependent reduction of glutamyl-tRNA(Glu) to glutamate 1-semialdehyde (GSA). The sequence is that of Glutamyl-tRNA reductase from Rhodococcus opacus (strain B4).